Here is a 450-residue protein sequence, read N- to C-terminus: Phosphoglucosamine mutase (450 aa).

The Phosphoserine intermediate role is filled by Ser-102. 4 residues coordinate Mg(2+): Ser-102, Asp-243, Asp-245, and Asp-247. Residue Ser-102 is modified to Phosphoserine.

It belongs to the phosphohexose mutase family. Mg(2+) is required as a cofactor. Activated by phosphorylation.

The enzyme catalyses alpha-D-glucosamine 1-phosphate = D-glucosamine 6-phosphate. Catalyzes the conversion of glucosamine-6-phosphate to glucosamine-1-phosphate. The chain is Phosphoglucosamine mutase from Rhizobium rhizogenes (strain K84 / ATCC BAA-868) (Agrobacterium radiobacter).